Here is a 537-residue protein sequence, read N- to C-terminus: Cytochrome P450 monooxygenase alt2 (537 aa).

Residues 4 to 24 (HLLILAAVVLLIIHIVNNFLI) form a helical membrane-spanning segment. Position 474 (cysteine 474) interacts with heme.

It belongs to the cytochrome P450 family. The cofactor is heme.

It is found in the membrane. It functions in the pathway secondary metabolite biosynthesis. Its function is as follows. Cytochrome P450 monooxygenase; part of the gene cluster that mediates the biosynthesis of alternapyrone derivatives. Alternapyrone is a decaketide with octa-methylation from methionine on every C2 unit except the third unit. All the domains in the polyketide synthase alt5 are apparently involved in alternapyrone synthesis, that is, the 8 CMeT, 7 KR, 7 DH, and 4 ER reactions in the 9 KS-mediated condensation steps required for alternapyrone synthesis. the alternapyrone produced by alt5 might be intensively modified by cytochrome P450 monooxygenases alt1, alt2 and alt3 and FAD-dependent oxidoreductase alt4 present in the alt gene cluster. This chain is Cytochrome P450 monooxygenase alt2, found in Alternaria solani.